The chain runs to 136 residues: Large ribosomal subunit protein bL17 (136 aa).

Belongs to the bacterial ribosomal protein bL17 family. As to quaternary structure, part of the 50S ribosomal subunit. Contacts protein L32.

This chain is Large ribosomal subunit protein bL17, found in Methylobacterium radiotolerans (strain ATCC 27329 / DSM 1819 / JCM 2831 / NBRC 15690 / NCIMB 10815 / 0-1).